A 257-amino-acid chain; its full sequence is Staphylococcal secretory antigen SsaA (257 aa).

A signal peptide spans 1 to 26 (MKKIATATIATAGIATFAFAHHDAQA). 8 consecutive repeat copies span residues 73–75 (YNN), 76–78 (YNN), 84–86 (YNN), 87–89 (YSN), 90–92 (YNN), 93–95 (YSN), 96–98 (YNN), and 99–101 (YNN). An 8 X 3 AA repeats of Y-[NS]-N region spans residues 73 to 101 (YNNYNNYNYYGYNNYSNYNNYSNYNNYNN). The tract at residues 101-144 (NYQSNNTQSQRTTQPTGGLGASYSTSSSNVHVTTTSAPSSNGVS) is disordered. Residues 107-116 (TQSQRTTQPT) show a composition bias toward polar residues. Residues 122–136 (SYSTSSSNVHVTTTS) show a composition bias toward low complexity. Residues 136-257 (SAPSSNGVSL…SQAASYNYIH (122 aa)) enclose the Peptidase C51 domain.

It localises to the secreted. Not known; immunogenic protein expressed during sepsis and particularly during episodes of infective endocarditis. In Staphylococcus epidermidis, this protein is Staphylococcal secretory antigen SsaA (ssaA).